Consider the following 325-residue polypeptide: ATP phosphoribosyltransferase (325 aa).

The protein belongs to the ATP phosphoribosyltransferase family. Long subfamily. Mg(2+) serves as cofactor.

The protein localises to the cytoplasm. It catalyses the reaction 1-(5-phospho-beta-D-ribosyl)-ATP + diphosphate = 5-phospho-alpha-D-ribose 1-diphosphate + ATP. It participates in amino-acid biosynthesis; L-histidine biosynthesis; L-histidine from 5-phospho-alpha-D-ribose 1-diphosphate: step 1/9. Its activity is regulated as follows. Feedback inhibited by histidine. Its function is as follows. Catalyzes the condensation of ATP and 5-phosphoribose 1-diphosphate to form N'-(5'-phosphoribosyl)-ATP (PR-ATP). Has a crucial role in the pathway because the rate of histidine biosynthesis seems to be controlled primarily by regulation of HisG enzymatic activity. The chain is ATP phosphoribosyltransferase from Bradyrhizobium diazoefficiens (strain JCM 10833 / BCRC 13528 / IAM 13628 / NBRC 14792 / USDA 110).